The chain runs to 513 residues: Xylose import ATP-binding protein XylG (513 aa).

2 consecutive ABC transporter domains span residues 5-242 (LEMK…VGRE) and 259-505 (LRIE…LRSE). 37–44 (GENGSGKS) lines the ATP pocket.

The protein belongs to the ABC transporter superfamily. Xylose importer (TC 3.A.1.2.4) family. As to quaternary structure, the complex is composed of two ATP-binding proteins (XylG), two transmembrane proteins (XylH) and a solute-binding protein (XylF).

It is found in the cell inner membrane. It carries out the reaction D-xylose(out) + ATP + H2O = D-xylose(in) + ADP + phosphate + H(+). Its function is as follows. Part of the ABC transporter complex XylFGH involved in xylose import. Responsible for energy coupling to the transport system. The XylFGH system can also transport ribose in absence of xylose. The protein is Xylose import ATP-binding protein XylG of Escherichia coli (strain K12).